The following is a 416-amino-acid chain: Multifunctional CCA protein (416 aa).

The ATP site is built by G8 and R11. G8 and R11 together coordinate CTP. Mg(2+) contacts are provided by D21 and D23. 3 residues coordinate ATP: R91, R137, and R140. Positions 91, 137, and 140 each coordinate CTP. The region spanning T228–W329 is the HD domain.

It belongs to the tRNA nucleotidyltransferase/poly(A) polymerase family. Bacterial CCA-adding enzyme type 1 subfamily. In terms of assembly, monomer. Can also form homodimers and oligomers. The cofactor is Mg(2+). Requires Ni(2+) as cofactor.

It carries out the reaction a tRNA precursor + 2 CTP + ATP = a tRNA with a 3' CCA end + 3 diphosphate. The enzyme catalyses a tRNA with a 3' CCA end + 2 CTP + ATP = a tRNA with a 3' CCACCA end + 3 diphosphate. Its function is as follows. Catalyzes the addition and repair of the essential 3'-terminal CCA sequence in tRNAs without using a nucleic acid template. Adds these three nucleotides in the order of C, C, and A to the tRNA nucleotide-73, using CTP and ATP as substrates and producing inorganic pyrophosphate. tRNA 3'-terminal CCA addition is required both for tRNA processing and repair. Also involved in tRNA surveillance by mediating tandem CCA addition to generate a CCACCA at the 3' terminus of unstable tRNAs. While stable tRNAs receive only 3'-terminal CCA, unstable tRNAs are marked with CCACCA and rapidly degraded. In Shewanella sp. (strain MR-4), this protein is Multifunctional CCA protein.